The primary structure comprises 203 residues: Small ribosomal subunit protein uS4 (203 aa).

The S4 RNA-binding domain maps to 92–152; sequence LRLATVLLRA…EKSRKLVPFI (61 aa).

It belongs to the universal ribosomal protein uS4 family. As to quaternary structure, part of the 30S ribosomal subunit. Contacts protein S5. The interaction surface between S4 and S5 is involved in control of translational fidelity.

In terms of biological role, one of the primary rRNA binding proteins, it binds directly to 16S rRNA where it nucleates assembly of the body of the 30S subunit. Its function is as follows. With S5 and S12 plays an important role in translational accuracy. The polypeptide is Small ribosomal subunit protein uS4 (Thermobifida fusca (strain YX)).